Here is a 303-residue protein sequence, read N- to C-terminus: tRNA pseudouridine synthase B (303 aa).

The active-site Nucleophile is Asp-47.

Belongs to the pseudouridine synthase TruB family. Type 1 subfamily.

The catalysed reaction is uridine(55) in tRNA = pseudouridine(55) in tRNA. Responsible for synthesis of pseudouridine from uracil-55 in the psi GC loop of transfer RNAs. This Roseobacter denitrificans (strain ATCC 33942 / OCh 114) (Erythrobacter sp. (strain OCh 114)) protein is tRNA pseudouridine synthase B.